The sequence spans 764 residues: 5-methyltetrahydropteroyltriglutamate--homocysteine methyltransferase (764 aa).

Residues 16 to 19 and lysine 112 each bind 5-methyltetrahydropteroyltri-L-glutamate; that span reads RELK. L-homocysteine is bound by residues 431-433 and glutamate 484; that span reads IGS. Residues 431-433 and glutamate 484 each bind L-methionine; that span reads IGS. Residues 515–516 and tryptophan 561 contribute to the 5-methyltetrahydropteroyltri-L-glutamate site; that span reads RC. Aspartate 599 serves as a coordination point for L-homocysteine. An L-methionine-binding site is contributed by aspartate 599. A 5-methyltetrahydropteroyltri-L-glutamate-binding site is contributed by glutamate 605. The Zn(2+) site is built by histidine 641, cysteine 643, and glutamate 665. The active-site Proton donor is histidine 694. Cysteine 726 contributes to the Zn(2+) binding site.

Belongs to the vitamin-B12 independent methionine synthase family. The cofactor is Zn(2+).

It carries out the reaction 5-methyltetrahydropteroyltri-L-glutamate + L-homocysteine = tetrahydropteroyltri-L-glutamate + L-methionine. The protein operates within amino-acid biosynthesis; L-methionine biosynthesis via de novo pathway; L-methionine from L-homocysteine (MetE route): step 1/1. In terms of biological role, catalyzes the transfer of a methyl group from 5-methyltetrahydrofolate to homocysteine resulting in methionine formation. The chain is 5-methyltetrahydropteroyltriglutamate--homocysteine methyltransferase from Paraburkholderia phytofirmans (strain DSM 17436 / LMG 22146 / PsJN) (Burkholderia phytofirmans).